Consider the following 632-residue polypeptide: METSAAAASAGGFFPSFLLLAFGTLVAAVLGVAHRLGLFYQLMHKVDKTSIRHGGESVAAVLRAHGVRFVFTLVGGHISPLLVACEKLGIRVVDTRHEVTAVFAADAVARLTGTVGVAAVTAGPGLTNTVTAVKNAQVAQSPVLLLGGAASTLLQKRGALQAIDQMSLFRPLCKFCASVRRVRDIVPTLRTAIAAAQSGTPGPVFVELPLDVLYPYFMVEKEMIPTKLPNSLMGRVVVWYLQNCLANLFVGAWEPRPEGPLPLDIPQASPQQVQRCVEILSRAKRPLLVLGSQALLPPTPANKLRAAVETLGVPCFLGGMSRGLLGRNHPLHIRQNRSAALKKADVVVLAGAVCDFRLSYGRVLNRKSSIIIVNRNRDDLLLNSDIFWKPQEAVQGDVGSFMIKLVEGLQGQMWSSDWAEELRKADQQKEQTYRDKALMPVLQHLNPVWVLQQVEETLPDNALLVVDGGDFVATAAYLVQPRGPLRWLDPGAFGTLGVGAGFALGAKLCQPEAEVWCLFGDGAFGYSLIEFDTFVRHKVPVIALVGNDAGWTQISREQVPRLGSDVACSLAYTDYHKAAMGLGAQGLILSRDNKDQVVKVLREGQQLCQDGHAVVVNILIGRTDFRDGSISV.

A helical transmembrane segment spans residues 13 to 33 (FFPSFLLLAFGTLVAAVLGVA). Thiamine diphosphate is bound at residue glutamate 98. Serine 369 carries the phosphoserine modification. A thiamine pyrophosphate binding region spans residues 470–550 (DFVATAAYLV…VIALVGNDAG (81 aa)). Residues aspartate 521 and asparagine 547 each coordinate Mg(2+).

The protein belongs to the TPP enzyme family. Requires Mg(2+) as cofactor. Thiamine diphosphate serves as cofactor.

The protein resides in the endoplasmic reticulum membrane. The catalysed reaction is 2-hydroxyoctadecanoyl-CoA = heptadecanal + formyl-CoA. The enzyme catalyses (2R)-hydroxyhexadecanoyl-CoA = pentadecanal + formyl-CoA. In terms of biological role, endoplasmic reticulum 2-OH acyl-CoA lyase involved in the cleavage (C1 removal) reaction in the fatty acid alpha-oxydation in a thiamine pyrophosphate (TPP)-dependent manner. Involved in the phytosphingosine degradation pathway. The chain is 2-hydroxyacyl-CoA lyase 2 (Ilvbl) from Mus musculus (Mouse).